Reading from the N-terminus, the 156-residue chain is Ribosomal RNA large subunit methyltransferase H (156 aa).

S-adenosyl-L-methionine-binding positions include leucine 72, glycine 103, and leucine 122–leucine 127.

This sequence belongs to the RNA methyltransferase RlmH family. Homodimer.

It is found in the cytoplasm. It catalyses the reaction pseudouridine(1915) in 23S rRNA + S-adenosyl-L-methionine = N(3)-methylpseudouridine(1915) in 23S rRNA + S-adenosyl-L-homocysteine + H(+). In terms of biological role, specifically methylates the pseudouridine at position 1915 (m3Psi1915) in 23S rRNA. In Dechloromonas aromatica (strain RCB), this protein is Ribosomal RNA large subunit methyltransferase H.